The chain runs to 480 residues: Glutamyl-tRNA(Gln) amidotransferase subunit A (480 aa).

Active-site charge relay system residues include Lys76 and Ser151. Catalysis depends on Ser175, which acts as the Acyl-ester intermediate.

It belongs to the amidase family. GatA subfamily. Heterotrimer of A, B and C subunits.

It catalyses the reaction L-glutamyl-tRNA(Gln) + L-glutamine + ATP + H2O = L-glutaminyl-tRNA(Gln) + L-glutamate + ADP + phosphate + H(+). Functionally, allows the formation of correctly charged Gln-tRNA(Gln) through the transamidation of misacylated Glu-tRNA(Gln) in organisms which lack glutaminyl-tRNA synthetase. The reaction takes place in the presence of glutamine and ATP through an activated gamma-phospho-Glu-tRNA(Gln). This is Glutamyl-tRNA(Gln) amidotransferase subunit A from Exiguobacterium sibiricum (strain DSM 17290 / CCUG 55495 / CIP 109462 / JCM 13490 / 255-15).